A 600-amino-acid chain; its full sequence is Proline--tRNA ligase (600 aa).

The protein belongs to the class-II aminoacyl-tRNA synthetase family. ProS type 1 subfamily. In terms of assembly, homodimer.

It is found in the cytoplasm. The catalysed reaction is tRNA(Pro) + L-proline + ATP = L-prolyl-tRNA(Pro) + AMP + diphosphate. Functionally, catalyzes the attachment of proline to tRNA(Pro) in a two-step reaction: proline is first activated by ATP to form Pro-AMP and then transferred to the acceptor end of tRNA(Pro). As ProRS can inadvertently accommodate and process non-cognate amino acids such as alanine and cysteine, to avoid such errors it has two additional distinct editing activities against alanine. One activity is designated as 'pretransfer' editing and involves the tRNA(Pro)-independent hydrolysis of activated Ala-AMP. The other activity is designated 'posttransfer' editing and involves deacylation of mischarged Ala-tRNA(Pro). The misacylated Cys-tRNA(Pro) is not edited by ProRS. This is Proline--tRNA ligase from Prochlorococcus marinus (strain MIT 9211).